A 274-amino-acid polypeptide reads, in one-letter code: 3-methyl-2-oxobutanoate hydroxymethyltransferase (274 aa).

Residues aspartate 50 and aspartate 89 each coordinate Mg(2+). Residues 50-51 (DS), aspartate 89, and lysine 119 contribute to the 3-methyl-2-oxobutanoate site. Glutamate 121 lines the Mg(2+) pocket. The Proton acceptor role is filled by glutamate 188.

Belongs to the PanB family. As to quaternary structure, homodecamer; pentamer of dimers. Mg(2+) is required as a cofactor.

Its subcellular location is the cytoplasm. It catalyses the reaction 3-methyl-2-oxobutanoate + (6R)-5,10-methylene-5,6,7,8-tetrahydrofolate + H2O = 2-dehydropantoate + (6S)-5,6,7,8-tetrahydrofolate. It functions in the pathway cofactor biosynthesis; (R)-pantothenate biosynthesis; (R)-pantoate from 3-methyl-2-oxobutanoate: step 1/2. In terms of biological role, catalyzes the reversible reaction in which hydroxymethyl group from 5,10-methylenetetrahydrofolate is transferred onto alpha-ketoisovalerate to form ketopantoate. This is 3-methyl-2-oxobutanoate hydroxymethyltransferase from Methylorubrum extorquens (strain PA1) (Methylobacterium extorquens).